Here is a 274-residue protein sequence, read N- to C-terminus: Pantothenate synthetase (274 aa).

Position 26-33 (methionine 26–histidine 33) interacts with ATP. The Proton donor role is filled by histidine 33. Glutamine 57 provides a ligand contact to (R)-pantoate. Glutamine 57 is a beta-alanine binding site. An ATP-binding site is contributed by glycine 143–aspartate 146. (R)-pantoate is bound at residue glutamine 149. Residues valine 172 and leucine 180 to arginine 183 each bind ATP.

Belongs to the pantothenate synthetase family. Homodimer.

Its subcellular location is the cytoplasm. The enzyme catalyses (R)-pantoate + beta-alanine + ATP = (R)-pantothenate + AMP + diphosphate + H(+). Its pathway is cofactor biosynthesis; (R)-pantothenate biosynthesis; (R)-pantothenate from (R)-pantoate and beta-alanine: step 1/1. Catalyzes the condensation of pantoate with beta-alanine in an ATP-dependent reaction via a pantoyl-adenylate intermediate. In Dechloromonas aromatica (strain RCB), this protein is Pantothenate synthetase.